Reading from the N-terminus, the 305-residue chain is UDP-3-O-acyl-N-acetylglucosamine deacetylase (305 aa).

Residues histidine 79, histidine 238, and aspartate 242 each coordinate Zn(2+). Histidine 265 acts as the Proton donor in catalysis.

The protein belongs to the LpxC family. Zn(2+) is required as a cofactor.

It catalyses the reaction a UDP-3-O-[(3R)-3-hydroxyacyl]-N-acetyl-alpha-D-glucosamine + H2O = a UDP-3-O-[(3R)-3-hydroxyacyl]-alpha-D-glucosamine + acetate. It functions in the pathway glycolipid biosynthesis; lipid IV(A) biosynthesis; lipid IV(A) from (3R)-3-hydroxytetradecanoyl-[acyl-carrier-protein] and UDP-N-acetyl-alpha-D-glucosamine: step 2/6. Functionally, catalyzes the hydrolysis of UDP-3-O-myristoyl-N-acetylglucosamine to form UDP-3-O-myristoylglucosamine and acetate, the committed step in lipid A biosynthesis. This Shigella boydii serotype 18 (strain CDC 3083-94 / BS512) protein is UDP-3-O-acyl-N-acetylglucosamine deacetylase.